A 242-amino-acid chain; its full sequence is MTKQLKLSALFVALLASGTAVAGEASVQGYTVSGQSNEIVRNNYGECWKNAYFDKASQGRVECGDAVAAPEPEPEPEPAPAPVVVVEQAPQYVDETISLSAKTLFGFDKDSLRAEAQDNLKVLAQRLSRTNVQSVRVEGHTDFMGSDKYNQALSERRAYVVANNLVSNGVPVSRISAVGLGESQAQMTQVCEAEVAKLGAKVSKAKKREALIACIEPDRRVDVKIRSIVTRQVVPAHNHHQH.

A signal peptide spans 1-22; sequence MTKQLKLSALFVALLASGTAVA. A run of 7 repeats spans residues 69–70, 71–72, 73–74, 75–76, 77–78, 79–80, and 81–82. The 7 X 2 AA tandem repeats of X-P stretch occupies residues 69-82; the sequence is APEPEPEPEPAPAP. An OmpA-like domain is found at 92-229; it reads YVDETISLSA…RVDVKIRSIV (138 aa). C191 and C214 are disulfide-bonded.

The protein belongs to the outer membrane OOP (TC 1.B.6) superfamily. The C-terminus exists in a monomer-dimer equilibrium.

The protein resides in the cell outer membrane. The sequence is that of Outer membrane protein class 4 from Neisseria meningitidis serogroup B (strain ATCC BAA-335 / MC58).